The primary structure comprises 124 residues: uncharacterized protein (124 aa).

The tract at residues 1-28 is disordered; sequence MGTSLRSQSFREPRPSYGRLHESQGRSL. Over residues 9–28 the composition is skewed to basic and acidic residues; the sequence is SFREPRPSYGRLHESQGRSL.

This is an uncharacterized protein from Mus musculus (Mouse).